The sequence spans 96 residues: Large ribosomal subunit protein uL23 (96 aa).

The protein belongs to the universal ribosomal protein uL23 family. Part of the 50S ribosomal subunit. Contacts protein L29, and trigger factor when it is bound to the ribosome.

In terms of biological role, one of the early assembly proteins it binds 23S rRNA. One of the proteins that surrounds the polypeptide exit tunnel on the outside of the ribosome. Forms the main docking site for trigger factor binding to the ribosome. The chain is Large ribosomal subunit protein uL23 from Finegoldia magna (strain ATCC 29328 / DSM 20472 / WAL 2508) (Peptostreptococcus magnus).